Reading from the N-terminus, the 181-residue chain is Secreted chorismate mutase (181 aa).

The signal sequence occupies residues 1-20 (MLASVALAALAGVGTPHATA). The Chorismate mutase domain maps to 21 to 100 (DDASPLVPLV…ATSSVEHTRF (80 aa)). Residues arginine 36, lysine 47, aspartate 56, 59 to 63 (REQQV), 92 to 96 (TSSVE), and arginine 121 each bind substrate. A disulfide bond links cysteine 147 and cysteine 180.

In terms of assembly, homodimer.

The protein resides in the secreted. The enzyme catalyses chorismate = prephenate. Its pathway is metabolic intermediate biosynthesis; prephenate biosynthesis; prephenate from chorismate: step 1/1. In terms of biological role, catalyzes the Claisen rearrangement of chorismate to prephenate. May play some role in the pathogenicity. The protein is Secreted chorismate mutase of Mycolicibacterium smegmatis (strain ATCC 700084 / mc(2)155) (Mycobacterium smegmatis).